The primary structure comprises 312 residues: Non-structural protein 12A (312 aa).

Positions Met-1 to Gly-23 are enriched in low complexity. Disordered regions lie at residues Met-1 to Val-37, Val-63 to Asn-97, and Lys-114 to Gly-162. The segment covering Val-63–Leu-73 has biased composition (basic and acidic residues). A compositionally biased stretch (polar residues) spans Lys-74–Asn-97. A compositionally biased stretch (basic and acidic residues) spans Asp-122 to Gln-134.

Belongs to the phytoreovirus non-structural protein Pns12A family.

It is found in the host cytoplasm. Constituent of viral factories. The sequence is that of Non-structural protein 12A from Rice dwarf virus (isolate Fujian) (RDV).